Consider the following 567-residue polypeptide: Wee1-like protein kinase 2 (567 aa).

Basic and acidic residues-rich tracts occupy residues 1–12 (MDDSSINKELKQ) and 26–36 (EGQKEAPESRE). 2 disordered regions span residues 1–103 (MDDS…DSRS) and 170–191 (RSNG…EGKV). S77 is modified (phosphoserine). Residues 174 to 176 (KRK) carry the Nuclear localization signal motif. The Protein kinase domain maps to 215 to 494 (FLEVEKIGVG…ARSRVLRPSL (280 aa)). ATP contacts are provided by residues 221-229 (IGVGEFGTV) and K244. The Nuclear export signal motif lies at 318-332 (KLKDILLQISLGLKY). The Proton acceptor role is filled by D342. Mg(2+)-binding residues include N347 and D384. A coiled-coil region spans residues 497 to 523 (AEELQQQLNLEKSKTATLERELREAQQ). The interval 502 to 567 (QQLNLEKSKT…SSFTCGKSSP (66 aa)) is disordered. The span at 507 to 520 (EKSKTATLERELRE) shows a compositional bias: basic and acidic residues. A compositionally biased stretch (polar residues) spans 555 to 567 (AKSSSFTCGKSSP).

It belongs to the protein kinase superfamily. Ser/Thr protein kinase family. WEE1 subfamily. In terms of processing, phosphorylation leads to increase its activity.

It is found in the nucleus. It catalyses the reaction L-tyrosyl-[protein] + ATP = O-phospho-L-tyrosyl-[protein] + ADP + H(+). Oocyte-specific protein tyrosine kinase that phosphorylates and inhibits CDK1 and acts as a key regulator of meiosis during both prophase I and metaphase II. Required to maintain meiotic arrest in oocytes during the germinal vesicle (GV) stage, a long period of quiescence at dictyate prophase I, by phosphorylating CDK1 at 'Tyr-15', leading to inhibit CDK1 activity and prevent meiotic reentry. Also required for metaphase II exit during egg activation by phosphorylating CDK1 at 'Tyr-15', to ensure exit from meiosis in oocytes and promote pronuclear formation. In Canis lupus familiaris (Dog), this protein is Wee1-like protein kinase 2 (WEE2).